The primary structure comprises 406 residues: Putative gustatory receptor 59f (406 aa).

The Cytoplasmic segment spans residues 1–36 (MRSSATKGAKLKNSPRERLSSFNPQYAERYKELYRT). Residues 37-57 (LFWLLLISVLANTAPITILPG) form a helical membrane-spanning segment. At 58–69 (CPNRFYRLVHLS) the chain is on the extracellular side. A helical transmembrane segment spans residues 70 to 90 (WMILWYGLFVLGSYWEFVLVT). Residues 91–99 (TQRVSLDRY) lie on the Cytoplasmic side of the membrane. The chain crosses the membrane as a helical span at residues 100–120 (LNAIESAIYVVHIFSIMLLTW). The Extracellular portion of the chain corresponds to 121–154 (QCRNWAPKLMTNIVTSDLNRAYTIDCNRTKRFIR). Asparagine 147 carries an N-linked (GlcNAc...) asparagine glycan. Residues 155–175 (LQLFLVGIFACLAIFFNIWTH) form a helical membrane-spanning segment. Residues 176 to 189 (KFVVYRSILSINSY) lie on the Cytoplasmic side of the membrane. A helical transmembrane segment spans residues 190-210 (VMPNIISSISFAQYYLLLQGI). Topologically, residues 211-259 (AWRQRRLTEGLERELTHLHSPRISEVQKIRMHHANLIDFTKAVNRTFQY) are extracellular. The N-linked (GlcNAc...) asparagine glycan is linked to asparagine 254. Residues 260–280 (SILLLFVGCFLNFNLVLFLVY) traverse the membrane as a helical segment. Residues 281–364 (QGIENPSMAD…RQHVVCGVIN (84 aa)) are Cytoplasmic-facing. Residues 365 to 385 (LDLKFLTTLLVASADFFIFLL) traverse the membrane as a helical segment. Residues 386–406 (QYDVTYEALSKSVQGNVTRYK) lie on the Extracellular side of the membrane. The N-linked (GlcNAc...) asparagine glycan is linked to asparagine 401.

Belongs to the insect chemoreceptor superfamily. Gustatory receptor (GR) family. Gr10a subfamily. Expressed in the adult abdomen and wing. In larvae, is expressed in neurons of the terminal external chemosensory organ.

The protein resides in the cell membrane. Its function is as follows. Probable gustatory receptor which mediates acceptance or avoidance behavior, depending on its substrates. This Drosophila melanogaster (Fruit fly) protein is Putative gustatory receptor 59f (Gr59f).